We begin with the raw amino-acid sequence, 323 residues long: Aquaporin-2 (323 aa).

The next 3 membrane-spanning stretches (helical) occupy residues 32–54 (FLAV…FTHR), 74–96 (YVAG…SVLG), and 103–123 (CFCY…AIYA). The NPA 1 motif lies at 85–87 (NPA). N-linked (GlcNAc...) asparagine glycosylation occurs at asparagine 143. 2 helical membrane-spanning segments follow: residues 161 to 181 (GAFV…LSMV) and 193 to 213 (FPIA…YNAG). Residues 217 to 219 (NPS) carry the NPA 2 motif. Residues 243–263 (YTWFFVPVVGSHAGAIVGAVI) form a helical membrane-spanning segment. Asparagine 292 is a glycosylation site (N-linked (GlcNAc...) asparagine).

It belongs to the MIP/aquaporin (TC 1.A.8) family.

It localises to the cell membrane. The catalysed reaction is H2O(in) = H2O(out). The enzyme catalyses glycerol(in) = glycerol(out). Aquaglyceroporin that may modulate the water content and osmolytes during anhydrobiosis. The sequence is that of Aquaporin-2 from Milnesium tardigradum (Water bear).